A 120-amino-acid chain; its full sequence is NAD(P)H-quinone oxidoreductase subunit 3 (120 aa).

A run of 3 helical transmembrane segments spans residues 7 to 27, 64 to 84, and 89 to 109; these read YEYV…ALTA, MFAL…PWAV, and LGLL…VALV.

Belongs to the complex I subunit 3 family. NDH-1 can be composed of about 15 different subunits; different subcomplexes with different compositions have been identified which probably have different functions.

The protein localises to the cellular thylakoid membrane. It carries out the reaction a plastoquinone + NADH + (n+1) H(+)(in) = a plastoquinol + NAD(+) + n H(+)(out). It catalyses the reaction a plastoquinone + NADPH + (n+1) H(+)(in) = a plastoquinol + NADP(+) + n H(+)(out). In terms of biological role, NDH-1 shuttles electrons from an unknown electron donor, via FMN and iron-sulfur (Fe-S) centers, to quinones in the respiratory and/or the photosynthetic chain. The immediate electron acceptor for the enzyme in this species is believed to be plastoquinone. Couples the redox reaction to proton translocation, and thus conserves the redox energy in a proton gradient. Cyanobacterial NDH-1 also plays a role in inorganic carbon-concentration. The sequence is that of NAD(P)H-quinone oxidoreductase subunit 3 from Crocosphaera subtropica (strain ATCC 51142 / BH68) (Cyanothece sp. (strain ATCC 51142)).